An 868-amino-acid chain; its full sequence is MSSFVLDFQEIEKTQLFLVGGKGLNLGELSNIQGIQVPEGFCVTTVGYEQAIGKNGAFQTLLNQLAMLKIEERDRIGEISKQIREVIMAVEIPVDVVESVAHYLSHFGDEHAYAVRSSATAEDLPYASFAGQQDTYLNVIGKENILQHIKKCWASLFTDRAVIYRMQNGFDHNQVSICVVIQKMVFPEASGILFTADPITSNRKVLSIDASFGLGEALVSGLVSADNYKVKEDEIVEKVIATKKLAIYGRKEGGTERKKIAPNQQKFQTLTEQQILQLARIGRQIEAYFGCPQDIEWCLVDDTIYIVQSRPITTLYPIPEVNDGENHVYISVGHQQMMTDAMKPLGLSFFLLTTSAPMCKAGGRLFVDATQRLASPASRDYLINTLGKSDPLIRDALTTVIERENFIKLLSDDEKEKDLSKNVPPASSQQQPENDPEIVTNLIKNSELSIEELKRNMQTKSGVDVLDFILEDIQQLKKVLFNSQSIAIIMAGMNASSWINEKMEQWLGEKNAADVLSQSVQHNITSEMGLALLDVADVIRPYPEVIAYLQHVEDDSFLDELIQFKGGEKVRDAIDAFLNKYGMRCSGEIDITKTRWSEQPATIIPMILNHIRDFEYGASKRKFEEGLQEALKKEKELLERLQHLPDGEQKVEETKRMICNLRNFIGYREYPKYGMIHRYFIYKQALLKEAEKLVQNNVLNEIEDIYYLTFEELHEVVRTNKLDYKIIHKQKNAYKLYEKLTPPRVITSDGEIITGKYKRENLPAEAIVGLPVSSGVVEGRARVILNMEDANLEDGDILVTAFTDPGWTPLFVSIKGLVTEVGGLMTHGAVIAREYGLPAVVGVENATKLIKDGQRIRVHGTEGYIEVL.

Residues 1–313 are ATP-binding; sequence MSSFVLDFQE…IYIVQSRPIT (313 aa). ATP contacts are provided by Lys22, Arg116, Gly131, Thr135, Gln182, Glu296, Gln308, and Arg310. The tract at residues 326–756 is rifampicin-binding; sequence NHVYISVGHQ…TSDGEIITGK (431 aa). A swivel phosphohistidine region spans residues 769 to 867; that stretch reads GLPVSSGVVE…VHGTEGYIEV (99 aa). His827 serves as the catalytic Tele-phosphohistidine intermediate.

This sequence belongs to the rifampicin phosphotransferase family.

The catalysed reaction is rifampicin + ATP + H2O = 21-phosphorifampicin + AMP + phosphate + 2 H(+). In terms of biological role, catalyzes the phosphorylation of rifampicin, also known as rifampin (RIF), leading to its inactivation. Confers high level resistance to a variety of clinically used rifamycin antibiotics. Does not show phosphoenolpyruvate (PEP) synthase activity. The chain is Rifampicin phosphotransferase from Bacillus cereus (strain ATCC 14579 / DSM 31 / CCUG 7414 / JCM 2152 / NBRC 15305 / NCIMB 9373 / NCTC 2599 / NRRL B-3711).